An 85-amino-acid chain; its full sequence is Elongation factor 1-beta (85 aa).

The protein belongs to the EF-1-beta/EF-1-delta family.

In terms of biological role, promotes the exchange of GDP for GTP in EF-1-alpha/GDP, thus allowing the regeneration of EF-1-alpha/GTP that could then be used to form the ternary complex EF-1-alpha/GTP/AAtRNA. The chain is Elongation factor 1-beta from Methanospirillum hungatei JF-1 (strain ATCC 27890 / DSM 864 / NBRC 100397 / JF-1).